The sequence spans 56 residues: Large ribosomal subunit protein bL33 (56 aa).

It belongs to the bacterial ribosomal protein bL33 family.

This chain is Large ribosomal subunit protein bL33, found in Actinobacillus pleuropneumoniae serotype 5b (strain L20).